A 75-amino-acid chain; its full sequence is Cytochrome c oxidase subunit 6C (75 aa).

Over 1 to 13 the chain is Mitochondrial matrix; that stretch reads MAPEVLPKPRMRG. Residues 14 to 54 traverse the membrane as a helical segment; it reads LLARRLRNHMAVAFVLSLGVAALYKFRVADQRKKAYADFYR. Topologically, residues 55-75 are mitochondrial intermembrane; sequence NYDVMKDFEEMRKAGIFQSVK.

The protein belongs to the cytochrome c oxidase subunit 6c family. As to quaternary structure, component of the cytochrome c oxidase (complex IV, CIV), a multisubunit enzyme composed of 14 subunits. The complex is composed of a catalytic core of 3 subunits MT-CO1, MT-CO2 and MT-CO3, encoded in the mitochondrial DNA, and 11 supernumerary subunits COX4I1 (or COX4I2), COX5A, COX5B, COX6A1 (or COX6A2), COX6B1 (or COX6B2), COX6C, COX7A2 (or COX7A1), COX7B, COX7C, COX8A and NDUFA4, which are encoded in the nuclear genome. The complex exists as a monomer or a dimer and forms supercomplexes (SCs) in the inner mitochondrial membrane with NADH-ubiquinone oxidoreductase (complex I, CI) and ubiquinol-cytochrome c oxidoreductase (cytochrome b-c1 complex, complex III, CIII), resulting in different assemblies (supercomplex SCI(1)III(2)IV(1) and megacomplex MCI(2)III(2)IV(2)).

The protein localises to the mitochondrion inner membrane. It functions in the pathway energy metabolism; oxidative phosphorylation. In terms of biological role, component of the cytochrome c oxidase, the last enzyme in the mitochondrial electron transport chain which drives oxidative phosphorylation. The respiratory chain contains 3 multisubunit complexes succinate dehydrogenase (complex II, CII), ubiquinol-cytochrome c oxidoreductase (cytochrome b-c1 complex, complex III, CIII) and cytochrome c oxidase (complex IV, CIV), that cooperate to transfer electrons derived from NADH and succinate to molecular oxygen, creating an electrochemical gradient over the inner membrane that drives transmembrane transport and the ATP synthase. Cytochrome c oxidase is the component of the respiratory chain that catalyzes the reduction of oxygen to water. Electrons originating from reduced cytochrome c in the intermembrane space (IMS) are transferred via the dinuclear copper A center (CU(A)) of subunit 2 and heme A of subunit 1 to the active site in subunit 1, a binuclear center (BNC) formed by heme A3 and copper B (CU(B)). The BNC reduces molecular oxygen to 2 water molecules using 4 electrons from cytochrome c in the IMS and 4 protons from the mitochondrial matrix. The chain is Cytochrome c oxidase subunit 6C (COX6C) from Homo sapiens (Human).